Here is a 505-residue protein sequence, read N- to C-terminus: L-arabinose isomerase (505 aa).

Mn(2+) is bound by residues Glu-310, Glu-337, His-354, and His-453.

This sequence belongs to the arabinose isomerase family. The cofactor is Mn(2+).

The catalysed reaction is beta-L-arabinopyranose = L-ribulose. It participates in carbohydrate degradation; L-arabinose degradation via L-ribulose; D-xylulose 5-phosphate from L-arabinose (bacterial route): step 1/3. Catalyzes the conversion of L-arabinose to L-ribulose. The chain is L-arabinose isomerase from Clavibacter sepedonicus (Clavibacter michiganensis subsp. sepedonicus).